A 250-amino-acid chain; its full sequence is Proteasome subunit alpha type-4-1 (250 aa).

The protein belongs to the peptidase T1A family. As to quaternary structure, the 26S proteasome consists of a 20S proteasome core and two 19S regulatory subunits. The 20S proteasome core is composed of 28 subunits that are arranged in four stacked rings, resulting in a barrel-shaped structure. The two end rings are each formed by seven alpha subunits, and the two central rings are each formed by seven beta subunits. The catalytic chamber with the active sites is on the inside of the barrel.

It localises to the cytoplasm. It is found in the nucleus. Its function is as follows. The proteasome is a multicatalytic proteinase complex which is characterized by its ability to cleave peptides with Arg, Phe, Tyr, Leu, and Glu adjacent to the leaving group at neutral or slightly basic pH. The proteasome has an ATP-dependent proteolytic activity. This Oryza sativa subsp. indica (Rice) protein is Proteasome subunit alpha type-4-1.